The sequence spans 151 residues: Regulatory protein RecX (151 aa).

The protein belongs to the RecX family.

It is found in the cytoplasm. In terms of biological role, modulates RecA activity. The sequence is that of Regulatory protein RecX from Herminiimonas arsenicoxydans.